A 666-amino-acid chain; its full sequence is MSDSDSKRIDVEAPERVEQHELQVMPVGSTIEVPSLDSTPKLSKRNSSERSLPLRSYSKWSPTEQGATLVWRDLCVYTNVGGSGQRMKRIINNSTGAIQPGTLMALMGSSGSGKTTLMSTLAFRQPAGTVVQGDILINGRRIGPFMHRISGYVYQDDLFLGSLTVLEHLNFMAHLRLDRRVSKEERRLIIKELLERTGLLSAAQTRIGSGDDKKVLSGGERKRLAFAVELLNNPVILFCDEPTTGLDSYSAQQLVATLYELAQKGTTILCTIHQPSSQLFDNFNNVMLLADGRVAFTGSPQHALSFFANHGYYCPEAYNPADFLIGVLATDPGYEQASQRSAQHLCDQFAVSSAAKQRDMLVNLEIHMAQSGNFPFDTEVESFRGVAWYKRFHVVWLRASLTLLRDPTIQWLRFIQKIAMAFIIGACFAGTTEPSQLGVQAVQGALFIMISENTYHPMYSVLNLFPQGFPLFMRETRSGLYSTGQYYAANILALLPGMIIEPLIFVIICYWLTGLRSTFYAFGVTAMCVVLVMNVATACGCFFSTAFNSVPLAMAYLVPLDYIFMITSGIFIQVNSLPVAFWWTQFLSWMLYANEAMTAAQWSGVQNITCFQESADLPCFHTGQDVLDKYSFNESNVYRNLLAMVGLYFGFHLLGYYCLWRRARKL.

Residues 1-417 are Cytoplasmic-facing; that stretch reads MSDSDSKRID…TIQWLRFIQK (417 aa). Residues 26–55 form a disordered region; it reads PVGSTIEVPSLDSTPKLSKRNSSERSLPLR. The region spanning 69–316 is the ABC transporter domain; it reads LVWRDLCVYT…FANHGYYCPE (248 aa). 108–115 provides a ligand contact to ATP; sequence GSSGSGKT. A helical membrane pass occupies residues 418-438; sequence IAMAFIIGACFAGTTEPSQLG. The Extracellular segment spans residues 439–444; sequence VQAVQG. The helical transmembrane segment at 445–465 threads the bilayer; that stretch reads ALFIMISENTYHPMYSVLNLF. Topologically, residues 466–490 are cytoplasmic; that stretch reads PQGFPLFMRETRSGLYSTGQYYAAN. A helical transmembrane segment spans residues 491-511; sequence ILALLPGMIIEPLIFVIICYW. Residues 512–518 are Extracellular-facing; it reads LTGLRST. The helical transmembrane segment at 519 to 539 threads the bilayer; it reads FYAFGVTAMCVVLVMNVATAC. Topologically, residues 540-551 are cytoplasmic; sequence GCFFSTAFNSVP. The helical transmembrane segment at 552–572 threads the bilayer; sequence LAMAYLVPLDYIFMITSGIFI. Residues 573 to 639 lie on the Extracellular side of the membrane; sequence QVNSLPVAFW…YSFNESNVYR (67 aa). 2 N-linked (GlcNAc...) asparagine glycosylation sites follow: Asn-607 and Asn-633. A helical membrane pass occupies residues 640 to 660; the sequence is NLLAMVGLYFGFHLLGYYCLW. Residues 661-666 are Cytoplasmic-facing; sequence RRARKL.

The protein belongs to the ABC transporter superfamily. ABCG family. Eye pigment precursor importer (TC 3.A.1.204) subfamily. In terms of assembly, may form a heterodimer with w/white. In terms of tissue distribution, expressed in the eye, specifically in primary pigment cells, secondary pigment cells and retinula cells (at protein level).

It is found in the cytoplasmic vesicle membrane. It carries out the reaction L-kynurenine(out) + ATP + H2O = L-kynurenine(in) + ADP + phosphate + H(+). Functionally, ATP-dependent transporter of the ATP-binding cassette (ABC) family which transports various molecules including bioamines, neurotransmitters and metabolic intermediates. In the eye and probably in association with w/white, required for the transport of the eye brown pigment precursors, kynurenine and probably tryptophan, into pigment cell granules. In Malpighian tubules and pupal eyes, involved in kynurenine transport. Probably in association with w/white, plays a role in zinc storage granule biogenesis in Malpighian tubule principal epithelial cells. This Drosophila melanogaster (Fruit fly) protein is Protein scarlet.